The primary structure comprises 89 residues: Small ribosomal subunit protein uS15 (89 aa).

Belongs to the universal ribosomal protein uS15 family. As to quaternary structure, part of the 30S ribosomal subunit. Forms a bridge to the 50S subunit in the 70S ribosome, contacting the 23S rRNA.

In terms of biological role, one of the primary rRNA binding proteins, it binds directly to 16S rRNA where it helps nucleate assembly of the platform of the 30S subunit by binding and bridging several RNA helices of the 16S rRNA. Its function is as follows. Forms an intersubunit bridge (bridge B4) with the 23S rRNA of the 50S subunit in the ribosome. The polypeptide is Small ribosomal subunit protein uS15 (Salinispora tropica (strain ATCC BAA-916 / DSM 44818 / JCM 13857 / NBRC 105044 / CNB-440)).